The following is a 593-amino-acid chain: Copine-5 (593 aa).

One can recognise a C2 1 domain in the interval 2–134 (EQPEDMASLS…SPGSRLEKPL (133 aa)). Ser19 carries the phosphoserine modification. The Ca(2+) site is built by Asp38, Asp44, Asp98, Asp100, Ser103, Lys108, and Asp110. Ser103 carries the phosphoserine modification. Ser140 is subject to Phosphoserine. Positions 161-284 (KCGTIILSAE…ARGQSQFNIY (124 aa)) constitute a C2 2 domain. Positions 192, 198, 254, 256, and 262 each coordinate Ca(2+). The VWFA domain occupies 328–554 (NFTVAIDFTA…DVLAEIPDQL (227 aa)). The disordered stretch occupies residues 562-593 (GIRPRPPPAAPTHSPSQSPARTPPASPLHTHI). The segment covering 572–581 (PTHSPSQSPA) has biased composition (low complexity).

This sequence belongs to the copine family. Ca(2+) is required as a cofactor. Expressed in the brain, heart, stomach, spleen, lymph node and testis. Expressed in melanocytes.

The protein resides in the perikaryon. Its subcellular location is the cell projection. Functionally, probable calcium-dependent phospholipid-binding protein that may play a role in calcium-mediated intracellular processes. Plays a role in dendrite formation by melanocytes. The polypeptide is Copine-5 (Homo sapiens (Human)).